Reading from the N-terminus, the 555-residue chain is MTTSSSGSVETSANSRLGTFSFASASFTDLLGGNAGAGGGGVSRYKAMTPPSLPLSPPPVSPSSFFNSPIGMNQADFLGSPVLLTSSIFPSPTTGAFASQHFDWRPEVAAAQSADQGGKDEQRNSYSDFSFQTAPASEEAVRTTTFQPPVPPAPLGDEAYRSQQQQQPWGYQQQPAGMDAGANAASFGAAPFQATSSEMAPQVQGGGGYSQPQSQRRSSDDGYNWRKYGQKQVKGSENPRSYYKCTFPNCPTKKKVERSLDGQITEIVYKGTHNHAKPQNTRRNSGSSAAQVLQSGGDMSEHSFGGMSGTAATPENSSASFGDDEIRVGSPRAGNGGGDEFDDDEPDSKRWRKDGDGEGISMAGNRTVREPRVVVQTMSDIDILDDGYRWRKYGQKVVKGNPNPRSYYKCTTAGCPVRKHVERASHDLRAVITTYEGKHNHDVPAARGSAALYRPAPPAAAATSSHPYLPNQPPPMSYQPTGPQPYALRPDGFGGQGPFGGVVGGSSFGGFSGFDDARGSYMSQHQQQQRQNDAMHASRAKEEPGDDMFFQNSLY.

2 disordered regions span residues 133 to 183 and 197 to 248; these read TAPA…AGAN and SEMA…CTFP. Positions 163 to 183 are enriched in low complexity; the sequence is QQQQQPWGYQQQPAGMDAGAN. A DNA-binding region (WRKY 1) is located at residues 214–278; the sequence is SQRRSSDDGY…YKGTHNHAKP (65 aa). Positions 253–259 match the Nuclear localization signal motif; the sequence is KKKVERS. The segment at 270–365 is disordered; sequence KGTHNHAKPQ…DGEGISMAGN (96 aa). Polar residues-rich tracts occupy residues 277-294 and 310-320; these read KPQN…QVLQ and TAATPENSSAS. Residues 347–356 show a composition bias toward basic and acidic residues; that stretch reads DSKRWRKDGD. Residues 379–444 constitute a DNA-binding region (WRKY 2); that stretch reads SDIDILDDGY…YEGKHNHDVP (66 aa). The segment at 466–555 is transcription repression of gibberellic acid (GA)-induced promoters; it reads HPYLPNQPPP…DDMFFQNSLY (90 aa). The segment at 514-555 is disordered; the sequence is FDDARGSYMSQHQQQQRQNDAMHASRAKEEPGDDMFFQNSLY.

The protein belongs to the WRKY group II-a family. As to expression, expressed in aleurone cells. Mostly expressed in aleurone layers and leaves, and, to a lower extent, in roots, panicles and embryos.

Its subcellular location is the nucleus. Functionally, transcription activator. Interacts specifically with the W box (5'-(T)TGAC[CT]-3'), a frequently occurring elicitor-responsive cis-acting element. Negative regulator of both gibberellic acid (GA) and abscisic acid (ABA) signaling in aleurone cells, probably by interfering with GAM1, via the specific repression of GA- and ABA-induced promoters. This chain is WRKY transcription factor WRKY24, found in Oryza sativa subsp. japonica (Rice).